A 94-amino-acid chain; its full sequence is Large ribosomal subunit protein bL28 (94 aa).

Residues 1 to 21 form a disordered region; that stretch reads MARRCEVTGRGTVSGNNVSHS. Over residues 11–20 the composition is skewed to polar residues; sequence GTVSGNNVSH.

This sequence belongs to the bacterial ribosomal protein bL28 family.

The sequence is that of Large ribosomal subunit protein bL28 from Leptospira borgpetersenii serovar Hardjo-bovis (strain JB197).